The chain runs to 394 residues: NAD(P)H-quinone oxidoreductase subunit H (394 aa).

The protein belongs to the complex I 49 kDa subunit family. As to quaternary structure, NDH-1 can be composed of about 15 different subunits; different subcomplexes with different compositions have been identified which probably have different functions.

It is found in the cellular thylakoid membrane. The enzyme catalyses a plastoquinone + NADH + (n+1) H(+)(in) = a plastoquinol + NAD(+) + n H(+)(out). It catalyses the reaction a plastoquinone + NADPH + (n+1) H(+)(in) = a plastoquinol + NADP(+) + n H(+)(out). Its function is as follows. NDH-1 shuttles electrons from an unknown electron donor, via FMN and iron-sulfur (Fe-S) centers, to quinones in the respiratory and/or the photosynthetic chain. The immediate electron acceptor for the enzyme in this species is believed to be plastoquinone. Couples the redox reaction to proton translocation, and thus conserves the redox energy in a proton gradient. Cyanobacterial NDH-1 also plays a role in inorganic carbon-concentration. The chain is NAD(P)H-quinone oxidoreductase subunit H from Picosynechococcus sp. (strain ATCC 27264 / PCC 7002 / PR-6) (Agmenellum quadruplicatum).